The following is a 79-amino-acid chain: Probable [Fe-S]-dependent transcriptional repressor (79 aa).

Iron-sulfur cluster is bound by residues C56, C61, C64, and C70.

The protein belongs to the FeoC family.

Functionally, may function as a transcriptional regulator that controls feoABC expression. This chain is Probable [Fe-S]-dependent transcriptional repressor, found in Serratia proteamaculans (strain 568).